The sequence spans 196 residues: UPF0056 membrane protein BU449 (196 aa).

6 helical membrane-spanning segments follow: residues 8-28 (TILL…MTIL), 45-65 (IIAL…LIIL), 71-91 (TVSI…IFPS), 105-125 (FLVP…TLML), 134-154 (MFYL…ILLS), and 174-194 (MGLV…RAWF).

The protein belongs to the UPF0056 (MarC) family.

Its subcellular location is the cell membrane. The sequence is that of UPF0056 membrane protein BU449 from Buchnera aphidicola subsp. Acyrthosiphon pisum (strain APS) (Acyrthosiphon pisum symbiotic bacterium).